A 743-amino-acid polypeptide reads, in one-letter code: Glycerol dehydrogenase large subunit (743 aa).

Residues 1–24 (MRRSHLLATVACATLACAPLAANA) form the signal peptide. The span at 27–41 (APAGSGGSPTSSVPG) shows a compositional bias: low complexity. Disordered regions lie at residues 27-115 (APAG…GHDD) and 445-474 (ILPV…STGM).

It belongs to the bacterial PQQ dehydrogenase family. The cofactor is pyrroloquinoline quinone.

The protein localises to the secreted. The enzyme catalyses glycerol + A = dihydroxyacetone + AH2. Its function is as follows. Catalyzes the oxidation of glycerol to glycerone. Also acts, more slowly, on a number of other polyols including D-sorbitol, D-arabinitol, D-mannitol, meso-erythritol, adonitol and propylene glycol. This chain is Glycerol dehydrogenase large subunit (sldA), found in Gluconobacter oxydans (strain 621H) (Gluconobacter suboxydans).